We begin with the raw amino-acid sequence, 25 residues long: SPbeta prophage-derived uncharacterized protein YotF (25 aa).

The sequence is that of SPbeta prophage-derived uncharacterized protein YotF (yotF) from Bacillus subtilis (strain 168).